We begin with the raw amino-acid sequence, 332 residues long: Ferredoxin--NADP reductase 2 (332 aa).

7 residues coordinate FAD: glutamate 37, glutamine 45, tyrosine 50, valine 90, phenylalanine 124, aspartate 285, and threonine 326.

The protein belongs to the ferredoxin--NADP reductase type 2 family. In terms of assembly, homodimer. The cofactor is FAD.

It carries out the reaction 2 reduced [2Fe-2S]-[ferredoxin] + NADP(+) + H(+) = 2 oxidized [2Fe-2S]-[ferredoxin] + NADPH. The polypeptide is Ferredoxin--NADP reductase 2 (Bacillus pumilus (strain SAFR-032)).